A 722-amino-acid chain; its full sequence is A-type ATP synthase subunit I (722 aa).

The segment covering 309-321 has biased composition (basic and acidic residues); that stretch reads DYKPTGHDQHVPA. Residues 309 to 352 are disordered; the sequence is DYKPTGHDQHVPADDGADAATDGGTTASFDETDSPPVIQDNPGP. The segment covering 326-335 has biased composition (low complexity); it reads DAATDGGTTA. A run of 8 helical transmembrane segments spans residues 384–404, 419–439, 474–494, 505–525, 554–574, 590–610, 639–659, and 662–682; these read FYGFMIGDLGYGVLYALLGFW, GVAMWAGGFTALFGVLYGEVF, LAASLVFGIAHLAIGYVFGFV, AALESGGQLLLMAGVGVWLFS, LAAAVVGLVLVTLGEGAAGFL, IAAVLLAKAGMAYVVNLLVFG, FMLFSGEAHGEVLFPGLMHMG, and GILIGVLVLLVGHALVLALGV.

This sequence belongs to the V-ATPase 116 kDa subunit family. As to quaternary structure, has multiple subunits with at least A(3), B(3), C, D, E, F, H, I and proteolipid K(x).

It is found in the cell membrane. Functionally, component of the A-type ATP synthase that produces ATP from ADP in the presence of a proton gradient across the membrane. This Halobacterium salinarum (strain ATCC 700922 / JCM 11081 / NRC-1) (Halobacterium halobium) protein is A-type ATP synthase subunit I.